We begin with the raw amino-acid sequence, 182 residues long: CDP-diacylglycerol--glycerol-3-phosphate 3-phosphatidyltransferase (182 aa).

Over 2–12 (QFNIPTLLTLF) the chain is Cytoplasmic. A helical transmembrane segment spans residues 13-37 (RVILIPFFVLVFYLPVTWSPFAAAL). Residues 38–60 (IFCVAAVTDWFDGFLARRWNQST) are Periplasmic-facing. The chain crosses the membrane as a helical span at residues 61-81 (RFGAFLDPVADKVLVAIAMVL). Residues 82–86 (VTEHY) lie on the Cytoplasmic side of the membrane. Residues 87–107 (HSWWVTLPAATMIAREIIISA) traverse the membrane as a helical segment. The Periplasmic portion of the chain corresponds to 108 to 145 (LREWMAELGKRSSVAVSWIGKVKTTAQMVALAWLLWRP). A helical transmembrane segment spans residues 146 to 168 (NIWVEYAGIALFFVAAVLTLWSM). The Cytoplasmic portion of the chain corresponds to 169–181 (LQYLSAARADLLD).

This sequence belongs to the CDP-alcohol phosphatidyltransferase class-I family.

It is found in the cell inner membrane. It carries out the reaction a CDP-1,2-diacyl-sn-glycerol + sn-glycerol 3-phosphate = a 1,2-diacyl-sn-glycero-3-phospho-(1'-sn-glycero-3'-phosphate) + CMP + H(+). Its pathway is phospholipid metabolism; phosphatidylglycerol biosynthesis; phosphatidylglycerol from CDP-diacylglycerol: step 1/2. Catalyzes the conversion of cytidine diphosphate diacylglycerol (CDP-DG) and glycerol 3-phosphate into phosphatidylglycerol. Essential for the synthesis of anionic phospholipids, thereby playing a role in balancing the ratio of zwitterionic and anionic phospholipids, which is thought to be important for normal membrane function. The chain is CDP-diacylglycerol--glycerol-3-phosphate 3-phosphatidyltransferase from Shigella sonnei (strain Ss046).